A 240-amino-acid chain; its full sequence is Fibronectin type III domain-containing protein 5 (240 aa).

The span at 1-10 shows a compositional bias: gly residues; it reads MQAARGGAGR. The tract at residues 1-30 is disordered; sequence MQAARGGAGRPGREGRGLERECERSPGVGA. The segment covering 11–24 has biased composition (basic and acidic residues); the sequence is PGREGRGLERECER. The Fibronectin type-III domain maps to 64–155; it reads APVNVTVRHL…EPVLFKTPRE (92 aa). N-linked (GlcNAc...) asparagine glycans are attached at residues N67 and N112. Residues 181–201 traverse the membrane as a helical segment; the sequence is GEVLIIVVVLFMWAGVIALFC. Positions 210–221 are enriched in basic and acidic residues; sequence NEPNNNKEKTKS. Residues 210–240 form a disordered region; the sequence is NEPNNNKEKTKSASETSTPEHQGGGLLRSKI. The span at 231-240 shows a compositional bias: gly residues; that stretch reads QGGGLLRSKI. The Microbody targeting signal motif lies at 238–240; the sequence is SKI.

As to quaternary structure, dimer; may exist in other oligomeric forms. Post-translationally, N-Glycosylated. In terms of processing, the extracellular domain is cleaved and released from the cell membrane.

It localises to the cell membrane. The protein resides in the peroxisome membrane. Its subcellular location is the secreted. In terms of biological role, mediates beneficial effects of muscular exercise. Induces browning of white adipose tissue by stimulating UCP1 expression, at least in part, via the nuclear receptor PPARA. The polypeptide is Fibronectin type III domain-containing protein 5 (Fndc5) (Rattus norvegicus (Rat)).